We begin with the raw amino-acid sequence, 402 residues long: Secreted RxLR effector protein 73 (402 aa).

A signal peptide spans 1-23 (MRLLHVVVATVSLTGAITSLIAA). Residue N27 is glycosylated (N-linked (GlcNAc...) asparagine). The short motif at 104–107 (RVLR) is the RxLR element. N-linked (GlcNAc...) asparagine glycans are attached at residues N111, N134, N143, N165, and N286.

Belongs to the RxLR effector family.

It is found in the secreted. It localises to the host cell. Functionally, secreted effector that completely suppresses the host cell death induced by cell death-inducing proteins. This chain is Secreted RxLR effector protein 73, found in Plasmopara viticola (Downy mildew of grapevine).